Reading from the N-terminus, the 156-residue chain is S-ribosylhomocysteine lyase (156 aa).

Residues histidine 56, histidine 60, and cysteine 123 each coordinate Fe cation.

The protein belongs to the LuxS family. In terms of assembly, homodimer. Requires Fe cation as cofactor.

It carries out the reaction S-(5-deoxy-D-ribos-5-yl)-L-homocysteine = (S)-4,5-dihydroxypentane-2,3-dione + L-homocysteine. Its function is as follows. Involved in the synthesis of autoinducer 2 (AI-2) which is secreted by bacteria and is used to communicate both the cell density and the metabolic potential of the environment. The regulation of gene expression in response to changes in cell density is called quorum sensing. Catalyzes the transformation of S-ribosylhomocysteine (RHC) to homocysteine (HC) and 4,5-dihydroxy-2,3-pentadione (DPD). The sequence is that of S-ribosylhomocysteine lyase from Staphylococcus epidermidis (strain ATCC 35984 / DSM 28319 / BCRC 17069 / CCUG 31568 / BM 3577 / RP62A).